We begin with the raw amino-acid sequence, 232 residues long: MARRPDLQSGPERLAALVRSSIPPMHSAGLPFVGASLAVALLGRKRRWMRRAGLISAGANAAFFRHPPRVPPTRPGVVVAPADGLICLLGEATPPAELGLPDIPMQRVSIFLSVLDAHVQRAPIGGEVVAVRHRPGRFHSAELEAASEDNERNSVVIRTPEGLHIIAVQIAGLIARRIVCDVHVGDKLSIGDTYGLIRYGSRLDTYFPADARVLVSHGQRTLAGETVLAELA.

The active-site Schiff-base intermediate with substrate; via pyruvic acid is Ser201. Position 201 is a pyruvic acid (Ser); by autocatalysis (Ser201).

Belongs to the phosphatidylserine decarboxylase family. PSD-A subfamily. In terms of assembly, heterodimer of a large membrane-associated beta subunit and a small pyruvoyl-containing alpha subunit. The cofactor is pyruvate. Is synthesized initially as an inactive proenzyme. Formation of the active enzyme involves a self-maturation process in which the active site pyruvoyl group is generated from an internal serine residue via an autocatalytic post-translational modification. Two non-identical subunits are generated from the proenzyme in this reaction, and the pyruvate is formed at the N-terminus of the alpha chain, which is derived from the carboxyl end of the proenzyme. The post-translation cleavage follows an unusual pathway, termed non-hydrolytic serinolysis, in which the side chain hydroxyl group of the serine supplies its oxygen atom to form the C-terminus of the beta chain, while the remainder of the serine residue undergoes an oxidative deamination to produce ammonia and the pyruvoyl prosthetic group on the alpha chain.

The protein resides in the cell membrane. The catalysed reaction is a 1,2-diacyl-sn-glycero-3-phospho-L-serine + H(+) = a 1,2-diacyl-sn-glycero-3-phosphoethanolamine + CO2. The protein operates within phospholipid metabolism; phosphatidylethanolamine biosynthesis; phosphatidylethanolamine from CDP-diacylglycerol: step 2/2. Its function is as follows. Catalyzes the formation of phosphatidylethanolamine (PtdEtn) from phosphatidylserine (PtdSer). The chain is Phosphatidylserine decarboxylase proenzyme from Mycolicibacterium smegmatis (strain ATCC 700084 / mc(2)155) (Mycobacterium smegmatis).